A 1481-amino-acid polypeptide reads, in one-letter code: Cystic fibrosis transmembrane conductance regulator (1481 aa).

Over 1-77 (MQRSPLEKAS…KLINALRRCF (77 aa)) the chain is Cytoplasmic. The helical transmembrane segment at 78 to 98 (FWRFMFYGIILYLGEVTKAVQ) threads the bilayer. The ABC transmembrane type-1 1 domain maps to 81-365 (FMFYGIILYL…WAVQTWYDSL (285 aa)). Topologically, residues 99-122 (PLLLGRIIASYDPDNKVERSIAIY) are extracellular. The chain crosses the membrane as a helical span at residues 123 to 146 (LGIGLCLLFIVRTLLLHPAIFGLH). The Cytoplasmic segment spans residues 147–195 (HIGMQMRIAMFSLIYKKTLKLSSRVLDKISIGQLVSLLSNNLNKFDEGL). The chain crosses the membrane as a helical span at residues 196–216 (ALAHFVWIAPLQVTLLMGLLW). The Extracellular segment spans residues 217 to 222 (DLLQAF). Residues 223 to 243 (TFCGLAFLVVLALLQAGLGKM) form a helical membrane-spanning segment. At 244-298 (MMKYRDQRAGKINERLVITSEMIENIQSVKAYCWEEAMEKIIENLRQTELKLTRK) the chain is on the cytoplasmic side. The helical transmembrane segment at 299 to 319 (AAYVRYLNSSAFFFSGFFVVF) threads the bilayer. Topologically, residues 320-339 (LSVLPYALLKGIILRKIFTT) are extracellular. A helical transmembrane segment spans residues 340–358 (ISFCIVLRMAVTRQFPWAV). The Cytoplasmic portion of the chain corresponds to 359–858 (QTWYDSLGAI…YLRYITVHKS (500 aa)). Residues tryptophan 401, 457 to 464 (GSTGAGKT), and glutamine 492 contribute to the ATP site. An ABC transporter 1 domain is found at 421-645 (ISNCDTSLFF…RPDFSSKLMG (225 aa)). Cysteine 523 is lipidated: S-palmitoyl cysteine. Phosphoserine is present on residues serine 548 and serine 659. The interval 653-831 (TAERRNSIIT…EEINEEDLRD (179 aa)) is disordered R region. Serine 669 bears the Phosphoserine; by PKA mark. A Phosphoserine modification is found at serine 685. A Glycyl lysine isopeptide (Lys-Gly) (interchain with G-Cter in ubiquitin) cross-link involves residue lysine 687. Serine 699 and serine 711 each carry phosphoserine. Threonine 716 is modified (phosphothreonine). Residues serine 736, serine 767, serine 790, serine 795, and serine 813 each carry the phosphoserine modification. Residues 859-879 (LMFVLIWCLVVFLVEVAASLV) traverse the membrane as a helical segment. Positions 859–1155 (LMFVLIWCLV…AVNSSIDVDS (297 aa)) constitute an ABC transmembrane type-1 2 domain. The Extracellular portion of the chain corresponds to 880 to 918 (VLCLFPKILLQDKGNSTKNASNSYAVIITSTSSYYIFYI). Residues asparagine 894 and asparagine 898 are each glycosylated (N-linked (GlcNAc...) asparagine). The chain crosses the membrane as a discontinuously helical span at residues 919–939 (YVGVADTLLALGLFRGLPLVH). Over 940–990 (TLITVSKTLHHKMLQSVLQAPMSTLNTLKTGGILNRFSKDIAVLDDLLPLT) the chain is Cytoplasmic. Residues 991–1011 (IFDFIQLLLIVIGAVVVVSVL) traverse the membrane as a helical segment. Topologically, residues 1012 to 1013 (QP) are extracellular. A helical membrane pass occupies residues 1014–1034 (YIFLATVPVIAAFILLRGYFL). Over 1035–1095 (HTSQQLKQLE…TANWFLYLST (61 aa)) the chain is Cytoplasmic. A helical membrane pass occupies residues 1096–1116 (LRWFQMRIEMIFVIFFIAVTF). Residues 1117 to 1130 (ISILTTGEGEGRVG) lie on the Extracellular side of the membrane. A helical membrane pass occupies residues 1131–1151 (IILTLAMNIMGTLQWAVNSSI). The Cytoplasmic portion of the chain corresponds to 1152 to 1481 (DVDSLMRSVS…TEEEVQETKL (330 aa)). The ABC transporter 2 domain maps to 1211 to 1444 (MTVKDLTAKY…KSLFRQAISP (234 aa)). Residues tyrosine 1220 and 1245 to 1252 (GRTGSGKS) each bind ATP. Positions 1387–1481 (RTLKQAFADC…TEEEVQETKL (95 aa)) are interaction with GORASP2. The S-palmitoyl cysteine moiety is linked to residue cysteine 1396. Residue serine 1457 is modified to Phosphoserine. Residues 1479-1481 (TKL) carry the PDZ-binding motif.

The protein belongs to the ABC transporter superfamily. ABCC family. CFTR transporter (TC 3.A.1.202) subfamily. Monomer; does not require oligomerization for channel activity. May form oligomers in the membrane. Interacts with SLC26A3, SLC26A6 and NHERF1. Interacts with SHANK2. Interacts with MYO6. Interacts (via C-terminus) with GOPC (via PDZ domain); this promotes CFTR internalization and thereby decreases channel activity. Interacts with SLC4A7 through NHERF1. Found in a complex with MYO5B and RAB11A. Interacts with ANO1. Interacts with SLC26A8. Interacts with AHCYL1; the interaction increases CFTR activity. Interacts with CSE1L. The core-glycosylated form interacts with GORASP2 (via PDZ GRASP-type 1 domain) in respone to ER stress. Interacts with MARCHF2; the interaction leads to CFTR ubiqtuitination and degradation. Interacts with ADGRG2. N-glycosylated. In terms of processing, phosphorylated; cAMP treatment promotes phosphorylation and activates the channel. Dephosphorylation decreases the ATPase activity (in vitro). Phosphorylation at PKA sites activates the channel. Phosphorylation at PKC sites enhances the response to phosphorylation by PKA. Phosphorylated by AMPK; this inhibits channel activity. Post-translationally, ubiquitinated, leading to its degradation in the lysosome. Deubiquitination by USP10 in early endosomes enhances its endocytic recycling to the cell membrane. Ubiquitinated by RNF185 during ER stress. Ubiquitinated by MARCHF2.

The protein localises to the apical cell membrane. It is found in the early endosome membrane. Its subcellular location is the cell membrane. The protein resides in the recycling endosome membrane. It localises to the endoplasmic reticulum membrane. The protein localises to the nucleus. It catalyses the reaction ATP + H2O + closed Cl(-) channel = ADP + phosphate + open Cl(-) channel.. It carries out the reaction chloride(in) = chloride(out). The enzyme catalyses hydrogencarbonate(in) = hydrogencarbonate(out). The catalysed reaction is ATP + H2O = ADP + phosphate + H(+). Epithelial ion channel that plays an important role in the regulation of epithelial ion and water transport and fluid homeostasis. Mediates the transport of chloride ions across the cell membrane. Possesses an intrinsic ATPase activity and utilizes ATP to gate its channel; the passive flow of anions through the channel is gated by cycles of ATP binding and hydrolysis by the ATP-binding domains. The ion channel is also permeable to HCO(3)(-); selectivity depends on the extracellular chloride concentration. Exerts its function also by modulating the activity of other ion channels and transporters. Contributes to the regulation of the pH and the ion content of the epithelial fluid layer. Modulates the activity of the epithelial sodium channel (ENaC) complex, in part by regulating the cell surface expression of the ENaC complex. May regulate bicarbonate secretion and salvage in epithelial cells by regulating the transporter SLC4A7. Can inhibit the chloride channel activity of ANO1. Plays a role in the chloride and bicarbonate homeostasis during sperm epididymal maturation and capacitation. The protein is Cystic fibrosis transmembrane conductance regulator of Ovis aries (Sheep).